A 138-amino-acid polypeptide reads, in one-letter code: Phospholipase A2 homolog crotoxin acid subunit CA (138 aa).

The signal sequence occupies residues 1–37 (MRALWIVAVLLVGVEGSLVEFETLMMKIAGRSGISYY). Disulfide bonds link Cys-42/Cys-131, Cys-44/Cys-60, Cys-59/Cys-111, Cys-65/Cys-138, Cys-66/Cys-104, Cys-73/Cys-97, Cys-91/Cys-102, and Cys-131/Cys-138. Residues 79 to 82 (VYTY) constitute a propeptide that is removed on maturation. A Pyrrolidone carboxylic acid modification is found at Gln-84. Residues 119–124 (YDYKYL) constitute a propeptide that is removed on maturation. Gln-125 carries the pyrrolidone carboxylic acid modification.

Belongs to the phospholipase A2 family. Group II subfamily. D49 sub-subfamily. As to quaternary structure, heterodimer of one of the acidic (CA1, CA2, CA3 or CA4) and one of the basic (CBa1, CBa2, CBb, CBc or CBd) subunits; non-covalently linked. The acidic subunit is non-toxic, without enzymatic activity and comprises 3 peptides that are cross-linked by 5 disulfide bridges. The basic subunit is toxic, has phospholipase A2 activity and is composed of a single chain. Multiple variants of each subunit give different crotoxin complexes that can be subdivided into 2 classes: (1) those of high toxicity, low PLA2 activity (CBb, CBc and CBd linked with high affinity to any CA) and high stability (K(d)=4.5 nM) and (2) those of moderate toxicity, high PLA2 activity (CBa2 linked with low affinity to any CA) and low stability (K(d)=25 nM). In terms of tissue distribution, expressed by the venom gland.

The protein resides in the secreted. Functionally, CAalpha-CAbeta-CAgamma: The acidic subunit of crotoxin (CA) is a heterotrimer of three disulfide-linked chains generated by post-translational maturation of a PLA2-like precursor. CA has no PLA2 activity and is not neurotoxic by itself, but plays several important functions in the crotoxin complex by increasing the lethal potency of the uncomplexed CB subunit. It acts by physically occluding the hydrophobic interfacial binding surface (IBS) of CB. This effect decreases the adsorption of CB to phospholipid membranes, targeting the crotoxin complex to reach the specific presynaptic receptor (R48) at the neuromuscular junction. It also prevents the formation of the reactive CB dimer. Moreover, the CA subunit inhibits the catalytic activity by partially masking the catalytic site of CB and inhibits its anticoagulant activity. Heterodimer CA-CB: Crotoxin is a potent presynaptic neurotoxin that possesses phospholipase A2 (PLA2) activity and exerts a lethal action by blocking neuromuscular transmission. It consists of a non-covalent association of a basic and weakly toxic PLA2 subunit (CBa2, CBb, CBc, or CBd), with a small acidic, non-enzymatic and non-toxic subunit (CA1, CA2, CA3 or CA4). The complex acts by binding to a specific 48-kDa protein (R48/CAPT) receptor located on presynaptic membranes, forming a transient ternary complex CA-CB-R48, followed by dissociation of the CA-CB complex and release of the CA subunit. At equilibrium, only the CB subunits remain associated with the specific crotoxin receptor. In addition to neurotoxicity, crotoxin has been found to exert myotoxicity, nephrotoxicity, and cardiovascular toxicity. Moreover, anti-inflammatory, immunomodulatory, anti-tumor and analgesic effects of crotoxin have also been reported. Its function is as follows. Found in the venom as a monomer and stabilized by one disulfide bond (Cys-131 and Cys-138). This peptide induces potent antinociceptive effects in acute and chronic pain models. This effect is mediated by the release of peripheral dynorphin A, an endogenous agonist of kappa-opioid receptors, and this release is dependent on cannabinoid receptor CB2 activation. This is Phospholipase A2 homolog crotoxin acid subunit CA from Crotalus durissus terrificus (South American rattlesnake).